The sequence spans 317 residues: Melanocyte-stimulating hormone receptor (317 aa).

The Extracellular segment spans residues Met1–Glu37. A glycan (N-linked (GlcNAc...) asparagine) is linked at Asn29. Residues Val38–Ile63 form a helical membrane-spanning segment. Residues Ala64 to Pro72 lie on the Cytoplasmic side of the membrane. The helical transmembrane segment at Met73 to Leu93 threads the bilayer. The Extracellular portion of the chain corresponds to Glu94 to Asn118. A helical transmembrane segment spans residues Val119 to Val140. At Asp141 to Arg163 the chain is on the cytoplasmic side. A helical membrane pass occupies residues Ala164–Tyr183. The Extracellular portion of the chain corresponds to Asp184–Cys191. The chain crosses the membrane as a helical span at residues Leu192–Leu211. At Ala212–Ala240 the chain is on the cytoplasmic side. Residues Ala241–Leu266 form a helical membrane-spanning segment. Topologically, residues Cys267–Asn279 are extracellular. The chain crosses the membrane as a helical span at residues Phe280–Phe300. At Arg301 to Trp317 the chain is on the cytoplasmic side. Cys315 carries the S-palmitoyl cysteine lipid modification.

The protein belongs to the G-protein coupled receptor 1 family. Interacts with MGRN1, but does not undergo MGRN1-mediated ubiquitination; this interaction competes with GNAS-binding and thus inhibits agonist-induced cAMP production. Interacts with OPN3; the interaction results in a decrease in MC1R-mediated cAMP signaling and ultimately a decrease in melanin production in melanocytes.

It localises to the cell membrane. Functionally, receptor for MSH (alpha, beta and gamma) and ACTH. The activity of this receptor is mediated by G proteins which activate adenylate cyclase. Mediates melanogenesis, the production of eumelanin (black/brown) and phaeomelanin (red/yellow), via regulation of cAMP signaling in melanocytes. The polypeptide is Melanocyte-stimulating hormone receptor (MC1R) (Papio anubis (Olive baboon)).